The following is a 1076-amino-acid chain: Regulator of G-protein signaling protein-like (1076 aa).

Residues 645–764 (NLTEVLLNTQ…LFPPHHQEVE (120 aa)) form the RGS domain. Residues 834–852 (TTAHNTSGRSAPPSTNVRS) show a composition bias toward polar residues. The tract at residues 834–854 (TTAHNTSGRSAPPSTNVRSAD) is disordered. A helical membrane pass occupies residues 960–982 (VFHGAIMSVFPVVMYFWKRFCFW).

Its subcellular location is the membrane. The chain is Regulator of G-protein signaling protein-like (RGSL1) from Homo sapiens (Human).